Consider the following 431-residue polypeptide: Tol-Pal system protein TolB (431 aa).

A signal peptide spans 1–26; it reads MSLMTKLGFRALVASCLIAAGSAANA. Residues 411-431 are disordered; sequence PQILSVQGGSVREPSWGPFMQ.

The protein belongs to the TolB family. In terms of assembly, the Tol-Pal system is composed of five core proteins: the inner membrane proteins TolA, TolQ and TolR, the periplasmic protein TolB and the outer membrane protein Pal. They form a network linking the inner and outer membranes and the peptidoglycan layer.

The protein localises to the periplasm. Its function is as follows. Part of the Tol-Pal system, which plays a role in outer membrane invagination during cell division and is important for maintaining outer membrane integrity. In Burkholderia multivorans (strain ATCC 17616 / 249), this protein is Tol-Pal system protein TolB.